Consider the following 511-residue polypeptide: Cytochrome P450 monooxygenase nodR (511 aa).

The helical transmembrane segment at 8 to 28 threads the bilayer; sequence ILFPISWEQSPIFLAVGLIFA. N-linked (GlcNAc...) asparagine glycosylation is found at asparagine 76 and asparagine 373. Cysteine 452 contributes to the heme binding site.

It belongs to the cytochrome P450 family. Heme serves as cofactor.

Its subcellular location is the membrane. The protein operates within secondary metabolite biosynthesis. Its function is as follows. Cytochrome P450 monooxygenase; part of the gene cluster that mediates the biosynthesis of the indole diterpenes nodulisporic acids (NA). Nodulisporic acid A (NAA) and its chemically modified derivatives are of particular significance because of their highly potent insecticidal activity against blood-feeding arthropods and lack of observable adverse effects on mammals, in particular the tremogenicity associated with the paspaline-derived IDTs is not observed. The geranylgeranyl diphosphate (GGPP) synthase ggs1, localized outside of the cluster, is proposed to catalyze the first step in nodulisporic acid biosynthesis via conversion of farnesyl pyrophosphate and isopentyl pyrophosphate into geranylgeranyl pyrophosphate (GGPP). Condensation of indole-3-glycerol phosphate with GGPP by the prenyl transferase nodC then forms 3-geranylgeranylindole (3-GGI). Epoxidation by the FAD-dependent monooxygenase nodM leads to a single-epoxidized-GGI that is substrate of the terpene cyclase nodB for cyclization to yield emindole SB. The terminal methyl carbon, C28, of emindole SB is then oxidized by the cytochrome P450 monooxygenase nodW to produce nodulisporic acid F (NAF), the pentacyclic core of NAA. NAF is converted to nodulisporic acid E (NAE) via prenylation. This step is probably performed by one of the indole diterpene prenyltransferases nodD1 or nodD2. Several oxidation steps performed by the FAD-linked oxidoreductase nodO and one of the cytochrome P450 monooxygenase nodR, nodX or nodZ further convert NAE to nodulisporic acid D (NAD). NAD is substrate of cytochrome P450 monooxygenase nodJ to produce the precursor of nodulisporic acid C (NAC), converted to NAC by one of the indole diterpene prenyltransferases nodD1 or nodD2. The FAD-dependent monooxygenase nodY2 then oxidizes NAC to nodulisporic acid B (NAB). Finally NAB is converted to NAA by one of the cytochrome P450 monooxygenases nodR, nodX or nodZ. This Hypoxylon pulicicidum protein is Cytochrome P450 monooxygenase nodR.